The sequence spans 105 residues: UPF0122 protein OB1530 (105 aa).

The protein belongs to the UPF0122 family.

Functionally, might take part in the signal recognition particle (SRP) pathway. This is inferred from the conservation of its genetic proximity to ftsY/ffh. May be a regulatory protein. The sequence is that of UPF0122 protein OB1530 from Oceanobacillus iheyensis (strain DSM 14371 / CIP 107618 / JCM 11309 / KCTC 3954 / HTE831).